The sequence spans 88 residues: Small ribosomal subunit protein uS15 (88 aa).

This sequence belongs to the universal ribosomal protein uS15 family. Part of the 30S ribosomal subunit. Forms a bridge to the 50S subunit in the 70S ribosome, contacting the 23S rRNA.

Its function is as follows. One of the primary rRNA binding proteins, it binds directly to 16S rRNA where it helps nucleate assembly of the platform of the 30S subunit by binding and bridging several RNA helices of the 16S rRNA. Forms an intersubunit bridge (bridge B4) with the 23S rRNA of the 50S subunit in the ribosome. This is Small ribosomal subunit protein uS15 from Mycoplasma capricolum subsp. capricolum (strain California kid / ATCC 27343 / NCTC 10154).